Reading from the N-terminus, the 170-residue chain is Adenine phosphoribosyltransferase (170 aa).

It belongs to the purine/pyrimidine phosphoribosyltransferase family. As to quaternary structure, homodimer.

Its subcellular location is the cytoplasm. The enzyme catalyses AMP + diphosphate = 5-phospho-alpha-D-ribose 1-diphosphate + adenine. It functions in the pathway purine metabolism; AMP biosynthesis via salvage pathway; AMP from adenine: step 1/1. In terms of biological role, catalyzes a salvage reaction resulting in the formation of AMP, that is energically less costly than de novo synthesis. The sequence is that of Adenine phosphoribosyltransferase from Lactococcus lactis subsp. lactis (strain IL1403) (Streptococcus lactis).